Consider the following 621-residue polypeptide: Elongation factor 4 (621 aa).

The region spanning 21-203 (DLIRNICIIA…AIVKRVPPPK (183 aa)) is the tr-type G domain. GTP contacts are provided by residues 33-38 (DHGKTT) and 150-153 (NKID).

This sequence belongs to the TRAFAC class translation factor GTPase superfamily. Classic translation factor GTPase family. LepA subfamily.

The protein resides in the cell inner membrane. The enzyme catalyses GTP + H2O = GDP + phosphate + H(+). In terms of biological role, required for accurate and efficient protein synthesis under certain stress conditions. May act as a fidelity factor of the translation reaction, by catalyzing a one-codon backward translocation of tRNAs on improperly translocated ribosomes. Back-translocation proceeds from a post-translocation (POST) complex to a pre-translocation (PRE) complex, thus giving elongation factor G a second chance to translocate the tRNAs correctly. Binds to ribosomes in a GTP-dependent manner. This chain is Elongation factor 4, found in Thermotoga maritima (strain ATCC 43589 / DSM 3109 / JCM 10099 / NBRC 100826 / MSB8).